A 149-amino-acid polypeptide reads, in one-letter code: Nucleoside diphosphate kinase (149 aa).

ATP is bound by residues Lys-9, Phe-57, Arg-85, Thr-91, Arg-102, and Asn-112. His-115 acts as the Pros-phosphohistidine intermediate in catalysis.

The protein belongs to the NDK family. As to quaternary structure, homotetramer. Mg(2+) serves as cofactor.

The protein resides in the cytoplasm. It catalyses the reaction a 2'-deoxyribonucleoside 5'-diphosphate + ATP = a 2'-deoxyribonucleoside 5'-triphosphate + ADP. The enzyme catalyses a ribonucleoside 5'-diphosphate + ATP = a ribonucleoside 5'-triphosphate + ADP. Functionally, major role in the synthesis of nucleoside triphosphates other than ATP. The ATP gamma phosphate is transferred to the NDP beta phosphate via a ping-pong mechanism, using a phosphorylated active-site intermediate. This is Nucleoside diphosphate kinase from Staphylococcus epidermidis (strain ATCC 35984 / DSM 28319 / BCRC 17069 / CCUG 31568 / BM 3577 / RP62A).